Here is a 120-residue protein sequence, read N- to C-terminus: Large ribosomal subunit protein eL8 (120 aa).

It belongs to the eukaryotic ribosomal protein eL8 family. As to quaternary structure, part of the 50S ribosomal subunit. Probably part of the RNase P complex.

It localises to the cytoplasm. Its function is as follows. Multifunctional RNA-binding protein that recognizes the K-turn motif in ribosomal RNA, the RNA component of RNase P, box H/ACA, box C/D and box C'/D' sRNAs. The sequence is that of Large ribosomal subunit protein eL8 from Halobacterium salinarum (strain ATCC 29341 / DSM 671 / R1).